The chain runs to 81 residues: Photosystem I iron-sulfur center (81 aa).

4Fe-4S ferredoxin-type domains lie at 2 to 31 and 39 to 68; these read SHSV…MIPW and IASA…VRVY. The [4Fe-4S] cluster site is built by C11, C14, C17, C21, C48, C51, C54, and C58.

In terms of assembly, the eukaryotic PSI reaction center is composed of at least 11 subunits. [4Fe-4S] cluster is required as a cofactor.

The protein localises to the plastid. It is found in the chloroplast thylakoid membrane. It catalyses the reaction reduced [plastocyanin] + hnu + oxidized [2Fe-2S]-[ferredoxin] = oxidized [plastocyanin] + reduced [2Fe-2S]-[ferredoxin]. Its function is as follows. Apoprotein for the two 4Fe-4S centers FA and FB of photosystem I (PSI); essential for photochemical activity. FB is the terminal electron acceptor of PSI, donating electrons to ferredoxin. The C-terminus interacts with PsaA/B/D and helps assemble the protein into the PSI complex. Required for binding of PsaD and PsaE to PSI. PSI is a plastocyanin-ferredoxin oxidoreductase, converting photonic excitation into a charge separation, which transfers an electron from the donor P700 chlorophyll pair to the spectroscopically characterized acceptors A0, A1, FX, FA and FB in turn. The sequence is that of Photosystem I iron-sulfur center from Arabis hirsuta (Hairy rock-cress).